Consider the following 304-residue polypeptide: UDP-N-acetylenolpyruvoylglucosamine reductase (304 aa).

Residues 33–198 (RVGGPVDILL…ITATFCFESG (166 aa)) enclose the FAD-binding PCMH-type domain. The active site involves R177. Residue S227 is the Proton donor of the active site. Residue E297 is part of the active site.

This sequence belongs to the MurB family. It depends on FAD as a cofactor.

The protein localises to the cytoplasm. The enzyme catalyses UDP-N-acetyl-alpha-D-muramate + NADP(+) = UDP-N-acetyl-3-O-(1-carboxyvinyl)-alpha-D-glucosamine + NADPH + H(+). Its pathway is cell wall biogenesis; peptidoglycan biosynthesis. In terms of biological role, cell wall formation. This chain is UDP-N-acetylenolpyruvoylglucosamine reductase, found in Clostridium botulinum (strain Alaska E43 / Type E3).